The chain runs to 237 residues: Lipoprotein-releasing system ATP-binding protein LolD (237 aa).

Positions 8 to 236 (ISVTDLRKTF…EAIKKSVKTA (229 aa)) constitute an ABC transporter domain. 40–47 (GKSGSGKS) provides a ligand contact to ATP.

The protein belongs to the ABC transporter superfamily. Lipoprotein translocase (TC 3.A.1.125) family. The complex is composed of two ATP-binding proteins (LolD) and two transmembrane proteins (LolC and LolE).

The protein localises to the cell inner membrane. Part of the ABC transporter complex LolCDE involved in the translocation of mature outer membrane-directed lipoproteins, from the inner membrane to the periplasmic chaperone, LolA. Responsible for the formation of the LolA-lipoprotein complex in an ATP-dependent manner. This chain is Lipoprotein-releasing system ATP-binding protein LolD, found in Leptospira interrogans serogroup Icterohaemorrhagiae serovar Lai (strain 56601).